The chain runs to 1773 residues: ATP-binding cassette sub-family A member 17 (1773 aa).

3 consecutive transmembrane segments (helical) span residues 22 to 42, 262 to 282, and 306 to 326; these read TLVT…VLYL, FPLL…NSIL, and AWFI…TVLF. The N-linked (GlcNAc...) asparagine glycan is linked to N340. 4 helical membrane passes run 342–362, 372–392, 403–423, and 444–464; these read TLIF…AFMM, GTVI…YITF, ILSC…ISLF, and FTQV…VAFL. Residues 525 to 758 form the ABC transporter 1 domain; that stretch reads IEIQHLYKVF…YGAGYYMTII (234 aa). 561-568 lines the ATP pocket; sequence GHNGAGKT. N615 carries an N-linked (GlcNAc...) asparagine glycan. Transmembrane regions (helical) follow at residues 912–932, 1088–1108, 1134–1154, 1166–1186, 1198–1218, 1236–1256, and 1293–1313; these read LVLS…LSFF, LVVN…ILTV, LLWD…VFFW, IPAV…LVYT, CVKL…LVTV, IFLI…YYNF, and IGKY…LLFL. N1340 carries an N-linked (GlcNAc...) asparagine glycan. The 234-residue stretch at 1369–1602 folds into the ABC transporter 2 domain; that stretch reads LVVKELSKVY…FGSGYSLQAK (234 aa). 1404-1411 contacts ATP; the sequence is GLNGAGKT. Residues 1690 to 1773 are disordered; that stretch reads NIQQGQAALD…SQPPSEPVLL (84 aa). Residues 1700-1710 show a composition bias toward low complexity; the sequence is SSLSPSNSRPI. Pro residues-rich tracts occupy residues 1711–1740 and 1763–1773; these read SSPP…PSRP and PSQPPSEPVLL.

Belongs to the ABC transporter superfamily. ABCA family. In terms of processing, N-glycosylated.

It is found in the endoplasmic reticulum membrane. The protein localises to the cytoplasm. The enzyme catalyses cholesterol(in) + ATP + H2O = cholesterol(out) + ADP + phosphate + H(+). Promotes cholesterol efflux from sperm which renders sperm capable of fertilization. Has also been shown to decrease levels of intracellular esterified neutral lipids including cholesteryl esters, fatty acid esters and triacylglycerols. This is ATP-binding cassette sub-family A member 17 from Rattus norvegicus (Rat).